Reading from the N-terminus, the 115-residue chain is Large ribosomal subunit protein bL20 (115 aa).

This sequence belongs to the bacterial ribosomal protein bL20 family.

Functionally, binds directly to 23S ribosomal RNA and is necessary for the in vitro assembly process of the 50S ribosomal subunit. It is not involved in the protein synthesizing functions of that subunit. This chain is Large ribosomal subunit protein bL20, found in Methylococcus capsulatus (strain ATCC 33009 / NCIMB 11132 / Bath).